The primary structure comprises 207 residues: Ribosome maturation factor RimM (207 aa).

The region spanning D114–Y207 is the PRC barrel domain.

It belongs to the RimM family. Binds ribosomal protein uS19.

It is found in the cytoplasm. In terms of biological role, an accessory protein needed during the final step in the assembly of 30S ribosomal subunit, possibly for assembly of the head region. Essential for efficient processing of 16S rRNA. May be needed both before and after RbfA during the maturation of 16S rRNA. It has affinity for free ribosomal 30S subunits but not for 70S ribosomes. The polypeptide is Ribosome maturation factor RimM (Bordetella pertussis (strain Tohama I / ATCC BAA-589 / NCTC 13251)).